A 446-amino-acid polypeptide reads, in one-letter code: Phosphoglucosamine mutase (446 aa).

Serine 103 (phosphoserine intermediate) is an active-site residue. Mg(2+) contacts are provided by serine 103, aspartate 242, aspartate 244, and aspartate 246. Serine 103 carries the phosphoserine modification.

This sequence belongs to the phosphohexose mutase family. It depends on Mg(2+) as a cofactor. Activated by phosphorylation.

The catalysed reaction is alpha-D-glucosamine 1-phosphate = D-glucosamine 6-phosphate. Catalyzes the conversion of glucosamine-6-phosphate to glucosamine-1-phosphate. The chain is Phosphoglucosamine mutase from Vibrio atlanticus (strain LGP32) (Vibrio splendidus (strain Mel32)).